The following is a 286-amino-acid chain: Polyamine aminopropyltransferase (286 aa).

Positions 5-238 constitute a PABS domain; it reads TMWHETLHDQ…GIMTFAWATD (234 aa). Residue Q33 coordinates S-methyl-5'-thioadenosine. Spermidine contacts are provided by H64 and D88. S-methyl-5'-thioadenosine is bound by residues E108 and 140 to 141; that span reads DG. The active-site Proton acceptor is the D158. Spermidine is bound at residue 158–161; sequence DCTD. P165 contributes to the S-methyl-5'-thioadenosine binding site.

Belongs to the spermidine/spermine synthase family. Homodimer or homotetramer.

The protein resides in the cytoplasm. The catalysed reaction is S-adenosyl 3-(methylsulfanyl)propylamine + putrescine = S-methyl-5'-thioadenosine + spermidine + H(+). It participates in amine and polyamine biosynthesis; spermidine biosynthesis; spermidine from putrescine: step 1/1. Functionally, catalyzes the irreversible transfer of a propylamine group from the amino donor S-adenosylmethioninamine (decarboxy-AdoMet) to putrescine (1,4-diaminobutane) to yield spermidine. The protein is Polyamine aminopropyltransferase of Salmonella newport (strain SL254).